The sequence spans 273 residues: HTH-type transcriptional activator RhaS (273 aa).

The 99-residue stretch at 174–272 (YQLLDWLQNN…SQSPRDLRSQ (99 aa)) folds into the HTH araC/xylS-type domain. 2 DNA-binding regions (H-T-H motif) span residues 191–212 (PELA…KNKT) and 239–262 (VTDI…KREF).

Binds DNA as a dimer.

The protein localises to the cytoplasm. Activates expression of the rhaBAD and rhaT operons. The polypeptide is HTH-type transcriptional activator RhaS (Yersinia pseudotuberculosis serotype I (strain IP32953)).